The chain runs to 456 residues: Adenylosuccinate lyase (456 aa).

N(6)-(1,2-dicarboxyethyl)-AMP-binding positions include arginine 15–tyrosine 16, asparagine 90–aspartate 92, and threonine 122–serine 123. Residue histidine 171 is the Proton donor/acceptor of the active site. N(6)-(1,2-dicarboxyethyl)-AMP is bound at residue glutamine 248. Serine 296 (proton donor/acceptor) is an active-site residue. Residues serine 297, lysine 302–asparagine 304, asparagine 310, arginine 336, and serine 341–arginine 345 each bind N(6)-(1,2-dicarboxyethyl)-AMP.

Belongs to the lyase 1 family. Adenylosuccinate lyase subfamily. In terms of assembly, homotetramer. Residues from neighboring subunits contribute catalytic and substrate-binding residues to each active site.

It catalyses the reaction N(6)-(1,2-dicarboxyethyl)-AMP = fumarate + AMP. The catalysed reaction is (2S)-2-[5-amino-1-(5-phospho-beta-D-ribosyl)imidazole-4-carboxamido]succinate = 5-amino-1-(5-phospho-beta-D-ribosyl)imidazole-4-carboxamide + fumarate. It functions in the pathway purine metabolism; AMP biosynthesis via de novo pathway; AMP from IMP: step 2/2. It participates in purine metabolism; IMP biosynthesis via de novo pathway; 5-amino-1-(5-phospho-D-ribosyl)imidazole-4-carboxamide from 5-amino-1-(5-phospho-D-ribosyl)imidazole-4-carboxylate: step 2/2. Its function is as follows. Catalyzes two reactions in de novo purine nucleotide biosynthesis. Catalyzes the breakdown of 5-aminoimidazole- (N-succinylocarboxamide) ribotide (SAICAR or 2-[5-amino-1-(5-phospho-beta-D-ribosyl)imidazole-4-carboxamido]succinate) to 5-aminoimidazole-4-carboxamide ribotide (AICAR or 5-amino-1-(5-phospho-beta-D-ribosyl)imidazole-4-carboxamide) and fumarate, and of adenylosuccinate (ADS or N(6)-(1,2-dicarboxyethyl)-AMP) to adenosine monophosphate (AMP) and fumarate. This chain is Adenylosuccinate lyase (purB), found in Pseudomonas aeruginosa (strain ATCC 15692 / DSM 22644 / CIP 104116 / JCM 14847 / LMG 12228 / 1C / PRS 101 / PAO1).